A 253-amino-acid chain; its full sequence is Shikimate dehydrogenase (253 aa).

Lys63 functions as the Proton acceptor in the catalytic mechanism. 115 to 119 contributes to the NADP(+) binding site; the sequence is GAGGA.

The protein belongs to the shikimate dehydrogenase family.

The catalysed reaction is shikimate + NADP(+) = 3-dehydroshikimate + NADPH + H(+). The protein operates within metabolic intermediate biosynthesis; chorismate biosynthesis; chorismate from D-erythrose 4-phosphate and phosphoenolpyruvate: step 4/7. This is Shikimate dehydrogenase (aroE) from Thermotoga neapolitana (strain ATCC 49049 / DSM 4359 / NBRC 107923 / NS-E).